A 340-amino-acid polypeptide reads, in one-letter code: tRNA N6-adenosine threonylcarbamoyltransferase (340 aa).

Fe cation-binding residues include histidine 115 and histidine 119. Substrate contacts are provided by residues 138–142 (VVSGG), aspartate 171, glycine 184, aspartate 188, and asparagine 278. Aspartate 306 contacts Fe cation.

The protein belongs to the KAE1 / TsaD family. Fe(2+) serves as cofactor.

It localises to the cytoplasm. It catalyses the reaction L-threonylcarbamoyladenylate + adenosine(37) in tRNA = N(6)-L-threonylcarbamoyladenosine(37) in tRNA + AMP + H(+). In terms of biological role, required for the formation of a threonylcarbamoyl group on adenosine at position 37 (t(6)A37) in tRNAs that read codons beginning with adenine. Is involved in the transfer of the threonylcarbamoyl moiety of threonylcarbamoyl-AMP (TC-AMP) to the N6 group of A37, together with TsaE and TsaB. TsaD likely plays a direct catalytic role in this reaction. The sequence is that of tRNA N6-adenosine threonylcarbamoyltransferase from Clostridium botulinum (strain Hall / ATCC 3502 / NCTC 13319 / Type A).